Consider the following 1216-residue polypeptide: DNA-directed RNA polymerase subunit beta' (1216 aa).

The Zn(2+) site is built by Cys-60, Cys-62, Cys-75, and Cys-78. Residues Asp-450, Asp-452, and Asp-454 each contribute to the Mg(2+) site. 4 residues coordinate Zn(2+): Cys-819, Cys-893, Cys-900, and Cys-903.

This sequence belongs to the RNA polymerase beta' chain family. As to quaternary structure, the RNAP catalytic core consists of 2 alpha, 1 beta, 1 beta' and 1 omega subunit. When a sigma factor is associated with the core the holoenzyme is formed, which can initiate transcription. The cofactor is Mg(2+). Zn(2+) serves as cofactor.

The enzyme catalyses RNA(n) + a ribonucleoside 5'-triphosphate = RNA(n+1) + diphosphate. DNA-dependent RNA polymerase catalyzes the transcription of DNA into RNA using the four ribonucleoside triphosphates as substrates. The polypeptide is DNA-directed RNA polymerase subunit beta' (Streptococcus agalactiae serotype Ia (strain ATCC 27591 / A909 / CDC SS700)).